Reading from the N-terminus, the 274-residue chain is MREYLNFLKYIKENGVLKGDRTGTGTRSIFGYQMRFDLQKGFPLVTTKKIHIPSVVHELLWFLSGSTNIKYLNDNNVRIWNEWATVDGELGPIYGKQWRDFNGQGIDQIADVIQMLKTNPNSRRILVSAWNPCVVPSEKISPQENVVKGNSALPPCHAMFQFYVANNKLSCMLTQRSADAFLGVPFNIASYSLLTHMVAQQCNLDVGEFIWSGGDCHIYNNHIEQVNEQLSREPLALPTLKILRKPNSIFDYKYEDFEFENYNHHPAIKAKISV.

Residue Arg-21 participates in dUMP binding. His-51 is a binding site for (6R)-5,10-methylene-5,6,7,8-tetrahydrofolate. Residue 123-124 (RR) coordinates dUMP. Residue Cys-156 is the Nucleophile of the active site. DUMP-binding positions include 176–179 (RSAD), Asn-187, and 217–219 (HIY). A (6R)-5,10-methylene-5,6,7,8-tetrahydrofolate-binding site is contributed by Asp-179. A (6R)-5,10-methylene-5,6,7,8-tetrahydrofolate-binding site is contributed by Ser-273.

This sequence belongs to the thymidylate synthase family. Bacterial-type ThyA subfamily. In terms of assembly, homodimer.

It is found in the cytoplasm. The enzyme catalyses dUMP + (6R)-5,10-methylene-5,6,7,8-tetrahydrofolate = 7,8-dihydrofolate + dTMP. Its pathway is pyrimidine metabolism; dTTP biosynthesis. Catalyzes the reductive methylation of 2'-deoxyuridine-5'-monophosphate (dUMP) to 2'-deoxythymidine-5'-monophosphate (dTMP) while utilizing 5,10-methylenetetrahydrofolate (mTHF) as the methyl donor and reductant in the reaction, yielding dihydrofolate (DHF) as a by-product. This enzymatic reaction provides an intracellular de novo source of dTMP, an essential precursor for DNA biosynthesis. The protein is Thymidylate synthase of Francisella tularensis subsp. novicida (strain U112).